Reading from the N-terminus, the 412-residue chain is Inositol polyphosphate-5-phosphatase A (412 aa).

The S-farnesyl cysteine moiety is linked to residue cysteine 409. The propeptide at 410–412 (VVQ) is removed in mature form.

It belongs to the inositol 1,4,5-trisphosphate 5-phosphatase type I family. In terms of assembly, interacts with TASOR. Post-translationally, isoprenylation at Cys-409 is required for localization at the membrane. As to expression, expressed at high levels in cerebellar Purkinje cells (at protein level). Expressed in Sertoli cells of the testis.

It localises to the cell membrane. It is found in the cell projection. The protein localises to the dendrite. It carries out the reaction 1D-myo-inositol 1,4,5-trisphosphate + H2O = 1D-myo-inositol 1,4-bisphosphate + phosphate. It catalyses the reaction 1D-myo-inositol 1,3,4,5-tetrakisphosphate + H2O = 1D-myo-inositol 1,3,4-trisphosphate + phosphate. Functionally, phosphatase that specifically hydrolyzes the 5-phosphate of inositol 1,4,5-trisphosphate to inositol 1,4-bisphosphate, and inositol 1,3,4,5-tetrasphosphate to inositol 1,3,4-trisphosphate. Plays a crucial role in the survival of cerebellar Purkinje cells. The sequence is that of Inositol polyphosphate-5-phosphatase A (Inpp5a) from Mus musculus (Mouse).